A 173-amino-acid chain; its full sequence is MSGRVRPIVVLVGPPGSGKTTIGRRLANALNTSVVDSDVLIEQLQGKPCGVVFAELGEPNFRDLEAEVIDFALTTAGVVSLGGGAVTTESVRQKLRAQIVVWVDVSAAEGVRRTAVENSRPLLDTTNPLERYSELLAQRRDFYKEVADYRAHTDGRSPQQIVADILGFLETLR.

Residue 16 to 21 participates in ATP binding; sequence GSGKTT. T20 provides a ligand contact to Mg(2+). Substrate-binding residues include D38, R62, and G83. R120 contributes to the ATP binding site. R139 contributes to the substrate binding site. R156 is an ATP binding site.

The protein belongs to the shikimate kinase family. As to quaternary structure, monomer. Mg(2+) serves as cofactor.

The protein resides in the cytoplasm. It catalyses the reaction shikimate + ATP = 3-phosphoshikimate + ADP + H(+). It participates in metabolic intermediate biosynthesis; chorismate biosynthesis; chorismate from D-erythrose 4-phosphate and phosphoenolpyruvate: step 5/7. Functionally, catalyzes the specific phosphorylation of the 3-hydroxyl group of shikimic acid using ATP as a cosubstrate. This Corynebacterium diphtheriae (strain ATCC 700971 / NCTC 13129 / Biotype gravis) protein is Shikimate kinase.